The sequence spans 492 residues: MKRSALILSFLPLVFGCDNPKSPGHSCASVYSVSSAAASSFCATFTASTVTATTGVPEALLSNCDYKTKHLSSACSCLGTAAVPTVATPSSVSSVYITSATATPTSFTFKTSTAHIVKVAKAATSSTAVVTTPVSVPTASSSFTGNGGTTCTVTEYAAISSAVASCSNILLSDIYAPPSSTIDLQGLQTGAAVIFAGKTTFGDTADSDFDPIVVSGTSVTITGVEGHVIDGNGAAYWDGQGSNGGSDKPDHFFVVKDMYNSRIENLYIQNWPVHCFEIESTEHLTVSGLTLNNSAGDAANSKSDGDPAAHNSDGFDIKESSYFTLENTWVHNQDDCVAVTSGTDIVVDGMYCYGGHGLSIGSIGGKSDNTVNGVTFSNSQVISSQNGCRIKTNSGETGEVYNIRYENITLSDISDYGIDVQQDYLNGGPTGEPTNGVTIANVTFVDVTGTMSDGKDYYILCGDDSCSNFVFDGVSITGGSGDNCNYPSTGCP.

The N-terminal stretch at 1–16 (MKRSALILSFLPLVFG) is a signal peptide. Cysteine 151 and cysteine 166 are oxidised to a cystine. PbH1 repeat units follow at residues 216–238 (GTSV…AYWD), 258–280 (MYNS…EIES), 281–319 (TEHL…DIKE), and 320–341 (SSYF…AVTS). A glycan (N-linked (GlcNAc...) asparagine) is linked at asparagine 292. The Proton donor role is filled by aspartate 334. Cysteine 336 and cysteine 352 form a disulfide bridge. Residue histidine 356 is part of the active site. PbH1 repeat units follow at residues 371 to 392 (VNGV…RIKT), 400 to 422 (VYNI…DVQQ), and 434 to 478 (TNGV…SITG). N-linked (GlcNAc...) asparagine glycans are attached at residues asparagine 407 and asparagine 441. Intrachain disulfides connect cysteine 461–cysteine 466 and cysteine 484–cysteine 491.

The protein belongs to the glycosyl hydrolase 28 family.

It localises to the secreted. The enzyme catalyses (1,4-alpha-D-galacturonosyl)n+m + H2O = (1,4-alpha-D-galacturonosyl)n + (1,4-alpha-D-galacturonosyl)m.. Its function is as follows. Involved in maceration and soft-rotting of plant tissue. Hydrolyzes the 1,4-alpha glycosidic bonds of de-esterified pectate in the smooth region of the plant cell wall. The polypeptide is Probable endopolygalacturonase D (pgaD) (Aspergillus flavus (strain ATCC 200026 / FGSC A1120 / IAM 13836 / NRRL 3357 / JCM 12722 / SRRC 167)).